We begin with the raw amino-acid sequence, 490 residues long: Protein LMBR1L (490 aa).

At 1 to 21 (MEAPDYEVLSVREQLFHERIR) the chain is on the extracellular side. Positions 1–59 (MEAPDYEVLSVREQLFHERIRECIISTLLFATLYILCHIFLTRFKKPAEFTTVDDEDAT) are interaction with LGB. The segment at 1–76 (MEAPDYEVLS…LCTFTLAIAL (76 aa)) is LCN1-binding. A helical membrane pass occupies residues 22–42 (ECIISTLLFATLYILCHIFLT). The Cytoplasmic segment spans residues 43-66 (RFKKPAEFTTVDDEDATVNKIALE). A helical transmembrane segment spans residues 67-87 (LCTFTLAIALGAVLLLPFSII). The Extracellular segment spans residues 88 to 114 (SNEVLLSLPRNYYIQWLNGSLIHGLWN). The helical transmembrane segment at 115–135 (LVFLFSNLSLIFLMPFAYFFT) threads the bilayer. Residues 136–154 (ESEGFAGSRRGVLGRVYET) lie on the Cytoplasmic side of the membrane. The helical transmembrane segment at 155–175 (VVMLMLLTLLVLGMVWVASAI) threads the bilayer. Residues 176–196 (LDNNKASRESLYDFWEYYLPY) lie on the Extracellular side of the membrane. A helical transmembrane segment spans residues 197-217 (LYSCISFLGVLLLLVCTPLGL). The Cytoplasmic segment spans residues 218-305 (ARMFSVTGKL…NLGYPLAMLC (88 aa)). The chain crosses the membrane as a helical span at residues 306–326 (LLVLTGLSVLIVAIHILELLI). Residues 327-350 (DEAAMPRGMQDASLGQVSFSRLGS) lie on the Extracellular side of the membrane. Residues 351-371 (FGAVIQVALIFYLMVSSVVGF) form a helical membrane-spanning segment. Over 372-388 (YSSPLFRSLRPRWHDTA) the chain is Cytoplasmic. A helical transmembrane segment spans residues 389 to 409 (MTQIIGNCVCLLVLSSALPVF). The Extracellular portion of the chain corresponds to 410–431 (SRTLGLTRFDLLGDFGRFNWLG). The chain crosses the membrane as a helical span at residues 432-452 (NFYIVFLYNAAFAGLTTLCLV). Topologically, residues 453-490 (KTFTAAVRAELIRAFGLDRLPLPVSGFPPRASRKTQHQ) are cytoplasmic.

Belongs to the LIMR family. In terms of assembly, dimer. Can also form higher oligomers. Interacts with LCN1; this interaction mediates the endocytosis of LCN1. Interacts with UBAC2, FAF2, VCP, AMFR, ZNRF3, CTNNB1, LRP6, GSK3A, GSK3B, FZD6, DVL2 and RNF43. Interaction with LGB and SCGB1A1 is controversial.

The protein localises to the cell membrane. It localises to the endoplasmic reticulum membrane. Plays an essential role in lymphocyte development by negatively regulating the canonical Wnt signaling pathway. In association with UBAC2 and E3 ubiquitin-protein ligase AMFR, promotes the ubiquitin-mediated degradation of CTNNB1 and Wnt receptors FZD6 and LRP6. LMBR1L stabilizes the beta-catenin destruction complex that is required for regulating CTNNB1 levels. Acts as a LCN1 receptor and can mediate its endocytosis. In Pongo abelii (Sumatran orangutan), this protein is Protein LMBR1L (LMBR1L).